The primary structure comprises 247 residues: MAGHSKWANTKHRKAAQDAKRGKIFTKVIRELVTAAKLGGGDAGSNPRLRAAMDKALANNMTRDTMNRAIARGVGGDDDSNMETIIYEGYGPGGTAVMVECLSDNRNRTVSEVRHAFTKTGGNLGTDGSVAYLFTKKGVISYAPGLDEDAVMDAALEAGADDVMTYDDGAIDVFTAWENMGAVKDVLDAAGLQADSAEVTMIPSTKADMDAETAPKLLRLIDMLEDCDDVQEVYHNGEISDEVAETL.

The tract at residues 1-20 (MAGHSKWANTKHRKAAQDAK) is disordered.

The protein belongs to the TACO1 family.

It localises to the cytoplasm. This Erwinia tasmaniensis (strain DSM 17950 / CFBP 7177 / CIP 109463 / NCPPB 4357 / Et1/99) protein is Probable transcriptional regulatory protein ETA_14870.